Reading from the N-terminus, the 366-residue chain is MNKVVLLCRPGFEKECAAEITDKAGKREIFGFARVKENAGYVIYECYQPEDGEKLISELPFSSLIFARQWFVVGELLQHLPPEDRITPIVGMLQGVVEKGGELRVEIADTNESKELMKFCRKFTVPLRAALRDAGVLTNYETPKRPVVHVFFIAPGCCYTGYSFAHNNSPFYMGIPRLKFPSDAPSRSTLKLEEALHVFIPEDEWDERLANGMYAVDLGACPGGWTYQLVKRNMWVYSVDNGPMAQSLMDTGQVTWLREDGFRYRPNRNNISWMVCDMVEKPAKVTALMAQWLVNGWCRETIFNLKLPMKKRYEEVSHNLAYLQAQLDEHGVNAQIQARQLYHDREEVTVHVRRLWAAVGGRRDER.

S-adenosyl-L-methionine is bound by residues S188, 221 to 224 (CPGG), D240, D260, and D277. K306 acts as the Proton acceptor in catalysis.

This sequence belongs to the class I-like SAM-binding methyltransferase superfamily. RNA methyltransferase RlmE family. RlmM subfamily. As to quaternary structure, monomer.

The protein resides in the cytoplasm. It catalyses the reaction cytidine(2498) in 23S rRNA + S-adenosyl-L-methionine = 2'-O-methylcytidine(2498) in 23S rRNA + S-adenosyl-L-homocysteine + H(+). Catalyzes the 2'-O-methylation at nucleotide C2498 in 23S rRNA. This is Ribosomal RNA large subunit methyltransferase M from Salmonella dublin (strain CT_02021853).